Consider the following 450-residue polypeptide: Tubulin beta-3 chain (450 aa).

The MREI motif signature appears at 1–4; sequence MREI. GTP-binding residues include glutamine 11, glutamate 69, serine 138, glycine 142, threonine 143, and glycine 144. Position 69 (glutamate 69) interacts with Mg(2+). Position 172 is a phosphoserine; by CDK1 (serine 172). Asparagine 204 and asparagine 226 together coordinate GTP. The segment at 422-450 is disordered; sequence YQQYQDATAEEEGEMYEDDDEESEAQGPK. Positions 429-450 are enriched in acidic residues; the sequence is TAEEEGEMYEDDDEESEAQGPK. Glutamate 438 carries the post-translational modification 5-glutamyl polyglutamate. Serine 444 is modified (phosphoserine).

The protein belongs to the tubulin family. In terms of assembly, heterodimer of alpha- and beta-tubulin. A typical microtubule is a hollow water-filled tube with an outer diameter of 25 nm and an inner diameter of 15 nM. Alpha-beta heterodimers associate head-to-tail to form protofilaments running lengthwise along the microtubule wall with the beta-tubulin subunit facing the microtubule plus end conferring a structural polarity. Microtubules usually have 13 protofilaments but different protofilament numbers can be found in some organisms and specialized cells. Interacts with gamma-tubulin; the interaction allows microtubules to nucleate from the gamma-tubulin ring complex (gTuRC). Interacts with UNC5C (via cytoplasmic domain); this interaction is decreased by NTN1/Netrin-1. Interacts with NLRP5/MATER at cytoskeleton microtubules. Interacts with DPYSL5. Interacts with CFAP61. It depends on Mg(2+) as a cofactor. Post-translationally, some glutamate residues at the C-terminus are polyglycylated, resulting in polyglycine chains on the gamma-carboxyl group. Glycylation is mainly limited to tubulin incorporated into axonemes (cilia and flagella) whereas glutamylation is prevalent in neuronal cells, centrioles, axonemes, and the mitotic spindle. Both modifications can coexist on the same protein on adjacent residues, and lowering polyglycylation levels increases polyglutamylation, and reciprocally. Cilia and flagella glycylation is required for their stability and maintenance. Flagella glycylation controls sperm motility. Some glutamate residues at the C-terminus are polyglutamylated, resulting in polyglutamate chains on the gamma-carboxyl group. Polyglutamylation plays a key role in microtubule severing by spastin (SPAST). SPAST preferentially recognizes and acts on microtubules decorated with short polyglutamate tails: severing activity by SPAST increases as the number of glutamates per tubulin rises from one to eight, but decreases beyond this glutamylation threshold. Glutamylation is also involved in cilia motility. In terms of processing, phosphorylated on Ser-172 by CDK1 during the cell cycle, from metaphase to telophase, but not in interphase. This phosphorylation inhibits tubulin incorporation into microtubules.

The protein resides in the cytoplasm. Its subcellular location is the cytoskeleton. It is found in the cell projection. It localises to the growth cone. The protein localises to the lamellipodium. The protein resides in the filopodium. Tubulin is the major constituent of microtubules, protein filaments consisting of alpha- and beta-tubulin heterodimers. Microtubules grow by the addition of GTP-tubulin dimers to the microtubule end, where a stabilizing cap forms. Below the cap, alpha-beta tubulin heterodimers are in GDP-bound state, owing to GTPase activity of alpha-tubulin. TUBB3 plays a critical role in proper axon guidance and maintenance. Binding of NTN1/Netrin-1 to its receptor UNC5C might cause dissociation of UNC5C from polymerized TUBB3 in microtubules and thereby lead to increased microtubule dynamics and axon repulsion. Plays a role in dorsal root ganglion axon projection towards the spinal cord. The chain is Tubulin beta-3 chain (Tubb3) from Rattus norvegicus (Rat).